A 466-amino-acid polypeptide reads, in one-letter code: MAAISQPVIVIGAGLAGTEAAWQIAEAGVPVILYEMRPQRQSPAHHSESFAELVCSNSFGAMASDRAAGLLHEELRRLGSLVFSKASEHQVPAGGALAVDRALFSEDLTRTVADHPLVEIRREELRSLPTEGIVVLCTGPLTSPDLAEDLQRFTGQDYCSFFDAASPIVTGESIDQAIAFRASRYDKGEAAYLNCPLNRDQYLAFREALVTAEQAELKDFEQESAKFFEGCLPIEELARRGEDTMRYGPLKPVGLFDARLGDWRDPENRSRRPYAIVQLRQEDRAGNLWNLVGFQTNLRWGEQKRIFQMIPGLSQAEFVRFGVMHRNTFVNAPQLLDASLQFRQRPTLLAAGQLIGTEGYSAAVAGGWLAGTNAARLALGRSPLVLPDTLVSGSLFRFISSAEPKYFQPMPPNFGILPNLEQPPRNKKDRYAAYRDRALQDLRDWQQTHAIGNLSPSTGLATTAIA.

12–17 (GAGLAG) contributes to the FAD binding site.

Belongs to the MnmG family. TrmFO subfamily. The cofactor is FAD.

It is found in the cytoplasm. It carries out the reaction uridine(54) in tRNA + (6R)-5,10-methylene-5,6,7,8-tetrahydrofolate + NADH + H(+) = 5-methyluridine(54) in tRNA + (6S)-5,6,7,8-tetrahydrofolate + NAD(+). The catalysed reaction is uridine(54) in tRNA + (6R)-5,10-methylene-5,6,7,8-tetrahydrofolate + NADPH + H(+) = 5-methyluridine(54) in tRNA + (6S)-5,6,7,8-tetrahydrofolate + NADP(+). Catalyzes the folate-dependent formation of 5-methyl-uridine at position 54 (M-5-U54) in all tRNAs. This Synechococcus elongatus (strain ATCC 33912 / PCC 7942 / FACHB-805) (Anacystis nidulans R2) protein is Methylenetetrahydrofolate--tRNA-(uracil-5-)-methyltransferase TrmFO.